A 341-amino-acid polypeptide reads, in one-letter code: tRNA (cytidine(56)-2'-O)-methyltransferase (341 aa).

S-adenosyl-L-methionine contacts are provided by residues Leu79 and 104-108 (GAEKV). The HD domain maps to 187–294 (IIRHVETVYK…VAHADNLVSM (108 aa)).

It belongs to the aTrm56 family. As to quaternary structure, homodimer.

The protein localises to the cytoplasm. The catalysed reaction is cytidine(56) in tRNA + S-adenosyl-L-methionine = 2'-O-methylcytidine(56) in tRNA + S-adenosyl-L-homocysteine + H(+). In terms of biological role, specifically catalyzes the AdoMet-dependent 2'-O-ribose methylation of cytidine at position 56 in tRNAs. This chain is tRNA (cytidine(56)-2'-O)-methyltransferase, found in Picrophilus torridus (strain ATCC 700027 / DSM 9790 / JCM 10055 / NBRC 100828 / KAW 2/3).